Consider the following 403-residue polypeptide: F-box only protein 22 (403 aa).

Methionine 1 carries the N-acetylmethionine modification. Positions 21–67 constitute an F-box domain; the sequence is FVLSNLAEVVERVLTFLPAKALLRVACVCRLWRECVRRVLRTHRSVT. Threonine 127 bears the Phosphothreonine mark. Serine 128 is modified (phosphoserine). Lysine 194 carries the N6-acetyllysine modification.

In terms of assembly, directly interacts with SKP1 and CUL1. Interacts (via C-terminal) with KDM4A. Interacts with TP53. Interacts with MTOR; this interaction promotes 'lys-27'-linked ubiquitination of MTOR. As to quaternary structure, (Microbial infection) Interacts with SARS_COV-2 protein NSP5; this interaction attenuates NSP5-mediated inhibition of innate immunity. Post-translationally, phosphorylated by EIF2AK4 at Thr-127 causes cytoplasmic retention of FBXO22. In terms of tissue distribution, predominantly expressed in liver, also enriched in cardiac muscle.

The protein localises to the cytoplasm. The protein resides in the nucleus. It localises to the myofibril. It is found in the sarcomere. Its subcellular location is the z line. Substrate-recognition component of the SCF (SKP1-CUL1-F-box protein)-type E3 ubiquitin ligase complex that is implicated in the control of various cellular processes such as cell cycle control, transcriptional regulation, DNA damage repair, and apoptosis. Promotes the proteasome-dependent degradation of key sarcomeric proteins, such as alpha-actinin (ACTN2) and filamin-C (FLNC), essential for maintenance of normal contractile function. Acts as a key regulator of histone methylation marks namely H3K9 and H3K36 methylation through the regulation of histone demethylase KDM4A protein levels. In complex with KDM4A, also regulates the abundance of TP53 by targeting methylated TP53 for degradation at the late senescent stage. Under oxidative stress, promotes the ubiquitination and degradation of BACH1. Mechanistically, reactive oxygen species (ROS) covalently modify cysteine residues on the bZIP domain of BACH1, leading to its release from chromatin and making it accessible to FBXO22. Upon amino acid depletion, mediates 'Lys-27'-linked ubiquitination of MTOR and thereby inhibits substrate recruitment to mTORC1. Also inhibits SARS-CoV-2 replication by inducing NSP5 degradation. In Homo sapiens (Human), this protein is F-box only protein 22 (FBXO22).